The following is a 316-amino-acid chain: MLP-like protein 34 (316 aa).

The protein belongs to the MLP family.

The chain is MLP-like protein 34 (MLP34) from Arabidopsis thaliana (Mouse-ear cress).